Consider the following 593-residue polypeptide: Putative auxin response factor 15 (593 aa).

Residues 126–228 (FTKVLTASDI…ELRVGIRRAR (103 aa)) constitute a DNA-binding region (TF-B3). Positions 511–592 (RTCTKVQMQG…MVKRIYIQKR (82 aa)) constitute a PB1 domain.

Belongs to the ARF family. Homodimers and heterodimers.

It localises to the nucleus. Its function is as follows. Auxin response factors (ARFs) are transcriptional factors that bind specifically to the DNA sequence 5'-TGTCTC-3' found in the auxin-responsive promoter elements (AuxREs). Could act as transcriptional activator or repressor. Formation of heterodimers with Aux/IAA proteins may alter their ability to modulate early auxin response genes expression. The chain is Putative auxin response factor 15 (ARF15) from Arabidopsis thaliana (Mouse-ear cress).